The chain runs to 688 residues: Envelope glycoprotein gp70 (688 aa).

The N-terminal stretch at 1–98 (MPNHQSGSPT…SVLGPPPVSG (98 aa)) is a signal peptide. The Extracellular segment spans residues 99–624 (ESYWAYLPKP…ALNPLDWTQY (526 aa)). N-linked (GlcNAc...) asparagine; by host glycosylation is found at Asn127 and Asn143. Residues 426 to 474 (LLPVDIGDEPWFDDSAIQTFRYATDLIRAKRFVAAIILGISALIAIITS) are a coiled coil. A propeptide spanning residues 455–456 (KR) is cleaved from the precursor. The fusion peptide stretch occupies residues 457–477 (FVAAIILGISALIAIITSFAV). Residues 463-481 (LGISALIAIITSFAVATTA) form an immunosuppression region. Asn498 carries N-linked (GlcNAc...) asparagine; by host glycosylation. A coiled-coil region spans residues 511 to 541 (LKLEARLNALEEVVLDLGQDVANLKTRMSTR). Asn557 carries an N-linked (GlcNAc...) asparagine; by host glycan. A helical membrane pass occupies residues 625 to 645 (FIFIGVGALLLVIVLMIFPIV). Residues 646–688 (FQCLAKSLDQVQSDLNVLLLKKKKGGNAAPAAEMVELPRVSYT) are Cytoplasmic-facing.

As to quaternary structure, the mature envelope protein (Env) consists of a trimer of SU-TM heterodimers attached by non-covalent interactions or by a labile interchain disulfide bond. Post-translationally, specific enzymatic cleavages in vivo yield mature proteins. Envelope glycoproteins are synthesized as an inactive precursor that is N-glycosylated and processed likely by host cell furin or by a furin-like protease in the Golgi to yield the mature SU and TM proteins. The cleavage site between SU and TM requires the minimal sequence [KR]-X-[KR]-R.

It localises to the virion membrane. It is found in the host cell membrane. Functionally, the surface protein (SU) attaches the virus to the host cell by binding to its receptor. This interaction triggers the refolding of the transmembrane protein (TM) and is thought to activate its fusogenic potential by unmasking its fusion peptide. Fusion occurs at the host cell plasma membrane. In terms of biological role, the transmembrane protein (TM) acts as a class I viral fusion protein. Under the current model, the protein has at least 3 conformational states: pre-fusion native state, pre-hairpin intermediate state, and post-fusion hairpin state. During viral and target cell membrane fusion, the coiled coil regions (heptad repeats) assume a trimer-of-hairpins structure, positioning the fusion peptide in close proximity to the C-terminal region of the ectodomain. The formation of this structure appears to drive apposition and subsequent fusion of viral and target cell membranes. Membranes fusion leads to delivery of the nucleocapsid into the cytoplasm. In Mouse mammary tumor virus (strain C3H) (MMTV), this protein is Envelope glycoprotein gp70 (env).